A 642-amino-acid chain; its full sequence is Threonine--tRNA ligase (642 aa).

The 61-residue stretch at 1–61 (MPIITLPDGS…TEDAELQLIT (61 aa)) folds into the TGS domain. Residues 242 to 535 (DHRKLGKSLD…LVEHYEGKFP (294 aa)) form a catalytic region. The Zn(2+) site is built by Cys-333, His-384, and His-512.

The protein belongs to the class-II aminoacyl-tRNA synthetase family. In terms of assembly, homodimer. Zn(2+) serves as cofactor.

The protein localises to the cytoplasm. It catalyses the reaction tRNA(Thr) + L-threonine + ATP = L-threonyl-tRNA(Thr) + AMP + diphosphate + H(+). Catalyzes the attachment of threonine to tRNA(Thr) in a two-step reaction: L-threonine is first activated by ATP to form Thr-AMP and then transferred to the acceptor end of tRNA(Thr). Also edits incorrectly charged L-seryl-tRNA(Thr). The chain is Threonine--tRNA ligase from Hydrogenovibrio crunogenus (strain DSM 25203 / XCL-2) (Thiomicrospira crunogena).